The chain runs to 305 residues: Lipoyl synthase (305 aa).

The [4Fe-4S] cluster site is built by Cys41, Cys46, Cys52, Cys68, Cys72, Cys75, and Ser281. One can recognise a Radical SAM core domain in the interval 54-270 (GARRTATFMI…RKVAMDKGFK (217 aa)). Over residues 283–298 (HADEQVNEAAKEKQRQ) the composition is skewed to basic and acidic residues. The segment at 283–305 (HADEQVNEAAKEKQRQGEAQLNS) is disordered.

It belongs to the radical SAM superfamily. Lipoyl synthase family. It depends on [4Fe-4S] cluster as a cofactor.

Its subcellular location is the cytoplasm. The catalysed reaction is [[Fe-S] cluster scaffold protein carrying a second [4Fe-4S](2+) cluster] + N(6)-octanoyl-L-lysyl-[protein] + 2 oxidized [2Fe-2S]-[ferredoxin] + 2 S-adenosyl-L-methionine + 4 H(+) = [[Fe-S] cluster scaffold protein] + N(6)-[(R)-dihydrolipoyl]-L-lysyl-[protein] + 4 Fe(3+) + 2 hydrogen sulfide + 2 5'-deoxyadenosine + 2 L-methionine + 2 reduced [2Fe-2S]-[ferredoxin]. It functions in the pathway protein modification; protein lipoylation via endogenous pathway; protein N(6)-(lipoyl)lysine from octanoyl-[acyl-carrier-protein]. Its function is as follows. Catalyzes the radical-mediated insertion of two sulfur atoms into the C-6 and C-8 positions of the octanoyl moiety bound to the lipoyl domains of lipoate-dependent enzymes, thereby converting the octanoylated domains into lipoylated derivatives. In Staphylococcus aureus (strain Mu3 / ATCC 700698), this protein is Lipoyl synthase.